A 244-amino-acid chain; its full sequence is Cysteine-rich secretory protein 1 (244 aa).

The first 19 residues, 1 to 19 (MALMLVLFFLAAVLPPSLL), serve as a signal peptide directing secretion. One can recognise an SCP domain in the interval 44-170 (SKHNQLRRMV…PLRYYYVCHY (127 aa)). The N-linked (GlcNAc...) asparagine glycan is linked to asparagine 145. Cystine bridges form between cysteine 190–cysteine 197, cysteine 193–cysteine 202, cysteine 206–cysteine 239, cysteine 215–cysteine 233, and cysteine 224–cysteine 237. Residues 206 to 239 (CGHEDKYTNCKYLKKMLSCEHELLKKGCKATCLC) enclose the ShKT domain.

It belongs to the CRISP family. As to expression, mainly found in the cauda epididymis where it is synthesized by the principal cells and secreted into the lumen. Binds to the heads of spermatozoa. Also expressed in the submandibular gland.

It localises to the cytoplasmic vesicle. The protein localises to the secretory vesicle. In terms of biological role, this protein is supposed to help spermatozoa undergo functional maturation while they move from the testis to the ductus deferens. The protein is Cysteine-rich secretory protein 1 (Crisp1) of Mus musculus (Mouse).